We begin with the raw amino-acid sequence, 341 residues long: Cobalt-precorrin-5B C(1)-methyltransferase (341 aa).

This sequence belongs to the CbiD family.

The enzyme catalyses Co-precorrin-5B + S-adenosyl-L-methionine = Co-precorrin-6A + S-adenosyl-L-homocysteine. It functions in the pathway cofactor biosynthesis; adenosylcobalamin biosynthesis; cob(II)yrinate a,c-diamide from sirohydrochlorin (anaerobic route): step 6/10. Catalyzes the methylation of C-1 in cobalt-precorrin-5B to form cobalt-precorrin-6A. This is Cobalt-precorrin-5B C(1)-methyltransferase from Picrophilus torridus (strain ATCC 700027 / DSM 9790 / JCM 10055 / NBRC 100828 / KAW 2/3).